A 113-amino-acid polypeptide reads, in one-letter code: UPF0482 protein YnfB (113 aa).

The signal sequence occupies residues 1–28 (MKITLSKRIGLLAFLLPCALALSTTVHA).

This sequence belongs to the UPF0482 family.

The sequence is that of UPF0482 protein YnfB from Shigella dysenteriae serotype 1 (strain Sd197).